We begin with the raw amino-acid sequence, 181 residues long: Copper-resistant cuproprotein CopI (181 aa).

Positions 1–24 (MFPRRLLPASLIVLGVLFGASAQA) are cleaved as a signal peptide. The Cu(2+) site is built by His-79, Cys-163, His-168, and Met-173.

Belongs to the CopI family.

Its subcellular location is the periplasm. Its function is as follows. Involved in copper tolerance. This Pseudomonas aeruginosa (strain ATCC 15692 / DSM 22644 / CIP 104116 / JCM 14847 / LMG 12228 / 1C / PRS 101 / PAO1) protein is Copper-resistant cuproprotein CopI.